A 118-amino-acid chain; its full sequence is Ig heavy chain V region AC38 205.12 (118 aa).

The interval 1–98 (EVQLQQSGPE…EDSAVYYCAR (98 aa)) is v segment. Cys-22 and Cys-96 are oxidised to a cystine. The d segment stretch occupies residues 99-104 (GYGYDP). The segment at 105 to 118 (FDVWGTGTTVTVSS) is j segment.

The polypeptide is Ig heavy chain V region AC38 205.12 (Mus musculus (Mouse)).